Here is an 895-residue protein sequence, read N- to C-terminus: MSPSQQQTSVFNALGSYADRIKDANGNFIKSSPSSSSSATPEPTSLSSSTSGKKAFSTATSKSGQQKQGSSPQPGAITAEDDGPWETVQSTRARQRTDRSEEKEKRGSSSKNWRERSHRDEKNQDDGEKRNGRERSKKEKGDKSNSAPFVGSATSSEKTAKSLSSSTKNAWGVTSSSQGENPIASNPGPKQKAQNDSTFRSSSAAAPVGPTTSTINEIIKQSEGSDEDNWRARPAKVEKNEKTEGPVSITQAQPQPQRQLAPPPSVNIWDLRKKMSVPVLVSPTSATSAVAGIPPKSDKEKSLTNGMVKEEDSGTGKSLSKKKSAAAAAAAGTSSTPPSIHDATLWPDIIQAAEVVKAGEDKKEKAKERLNSESASVAEESTIGIGKKPKWTPIPAHELLAAADHAAEQSRRQNRMEAKKRSSGREGGESGPTGSGAPGKSNKTRKGMPAAEGKKARKEGAQQKDGHASSKAGETIGAGTGKANGDVKETKEGDARSASQQESSSHRSGPSISASANTGIDSSLHARTKSTPNASTTPLPPHTFNLASSSNLPRSTRGRGEGRGSFGGGRARGGFRSSGALGHKGQLGHGYGHVHGQGQGFGYGYGSPPMGVAGLPVEGIIYAPLNPGAGAGAGASPNLYQRGYGMGFQPFYPAATAAASAGEGGPTGAAAGDAAGVYDPAAAVYGNMGMYKSASMPPPPMPQTVVPNLDPLRFYVLGQVEYYFSMQNLAMDFFLRQQMDSEGWIDIAMIASFNRIKSLTPETSIVRECMILSNYLEVREDKVRLSGAESHRWVLPDAAPSKFGPDPRSPSLAEGAESSEERDGAASGSQSGLVTAGEEGAQGLQASPRRMFGAQDVKDALMKSSALSTVNGEIKEKEEVKAMENEGEESENYEQ.

Disordered regions lie at residues Ala-24–Ser-265, Ser-285–Thr-344, Gly-359–Gly-590, Pro-796–Val-857, and Val-870–Gln-895. The span at Ser-31–Gly-75 shows a compositional bias: low complexity. The segment covering Gln-95 to Lys-143 has biased composition (basic and acidic residues). Low complexity predominate over residues Ser-152–Ala-170. Composition is skewed to polar residues over residues Gly-172–Ala-184 and Lys-192–Asn-216. A compositionally biased stretch (basic and acidic residues) spans Asp-228–Glu-244. The span at Gln-251–Leu-260 shows a compositional bias: low complexity. Residues Lys-296–Gly-314 are compositionally biased toward basic and acidic residues. Positions Ala-325–Thr-336 are enriched in low complexity. 4 stretches are compositionally biased toward basic and acidic residues: residues Gly-359–Asn-371, His-405–Gly-428, Glu-452–Ala-468, and Gly-485–Ala-495. Low complexity predominate over residues Arg-496–Ser-508. Positions Pro-510–Asp-521 are enriched in polar residues. Residues Arg-563 to Arg-572 are compositionally biased toward gly residues. The region spanning Val-706–Pro-796 is the HTH La-type RNA-binding domain. At Ser-847 the chain carries Phosphoserine. Positions Glu-873 to Glu-884 are enriched in basic and acidic residues. A compositionally biased stretch (acidic residues) spans Asn-885–Gln-895.

In terms of biological role, may act as an RNA-binding protein. The chain is La RNA-binding domain-containing protein LHP1 from Cryptococcus neoformans var. grubii serotype A (strain H99 / ATCC 208821 / CBS 10515 / FGSC 9487) (Filobasidiella neoformans var. grubii).